Here is a 534-residue protein sequence, read N- to C-terminus: Phenylalanine N-monooxygenase CYP79D16 (534 aa).

A signal peptide spans 1–21 (MEANVGFLTLCLAITLVRFLM). Position 472 (Cys-472) interacts with heme. N-linked (GlcNAc...) asparagine glycosylation is present at Asn-500.

This sequence belongs to the cytochrome P450 family. The cofactor is heme. Expressed in seedlings.

The catalysed reaction is L-phenylalanine + 2 reduced [NADPH--hemoprotein reductase] + 2 O2 = (E)-phenylacetaldehyde oxime + 2 oxidized [NADPH--hemoprotein reductase] + CO2 + 3 H2O + 2 H(+). Involved in L-phenylalanine-derived cyanogenic glycoside biosynthesis, including prunasin and amygdalin defensive agents. Catalyzes the conversion of L-phenylalanine (Phe) into phenylacetaldoxime (PAOx). Cannot use tyrosine (Tyr), tryptophan (Trp) and valine (Val) as substrates. The chain is Phenylalanine N-monooxygenase CYP79D16 from Prunus mume (Japanese apricot).